The primary structure comprises 91 residues: Large ribosomal subunit protein bL27 (91 aa).

The protein belongs to the bacterial ribosomal protein bL27 family.

The protein is Large ribosomal subunit protein bL27 of Deinococcus deserti (strain DSM 17065 / CIP 109153 / LMG 22923 / VCD115).